We begin with the raw amino-acid sequence, 750 residues long: Photosystem I P700 chlorophyll a apoprotein A1 (750 aa).

8 helical membrane passes run 70–93, 156–179, 195–219, 291–309, 346–369, 385–411, 433–455, and 531–549; these read VFSA…FHGA, LYCT…FHYH, LNHH…HVSL, IAHH…GHMY, WHAQ…HHMY, LSLF…IFMV, AIIS…LYIH, and FLVH…LILL. C573 and C582 together coordinate [4Fe-4S] cluster. Helical transmembrane passes span 589–610 and 664–686; these read HVFL…HFSW and LSAY…MFLF. H675 provides a ligand contact to chlorophyll a'. Chlorophyll a contacts are provided by M683 and Y691. W692 serves as a coordination point for phylloquinone. The chain crosses the membrane as a helical span at residues 724-744; sequence AVGVTHYLLGGIATTWAFFLA.

Belongs to the PsaA/PsaB family. As to quaternary structure, the PsaA/B heterodimer binds the P700 chlorophyll special pair and subsequent electron acceptors. PSI consists of a core antenna complex that captures photons, and an electron transfer chain that converts photonic excitation into a charge separation. The eukaryotic PSI reaction center is composed of at least 11 subunits. It depends on P700 is a chlorophyll a/chlorophyll a' dimer, A0 is one or more chlorophyll a, A1 is one or both phylloquinones and FX is a shared 4Fe-4S iron-sulfur center. as a cofactor.

The protein resides in the plastid. It localises to the chloroplast thylakoid membrane. It carries out the reaction reduced [plastocyanin] + hnu + oxidized [2Fe-2S]-[ferredoxin] = oxidized [plastocyanin] + reduced [2Fe-2S]-[ferredoxin]. PsaA and PsaB bind P700, the primary electron donor of photosystem I (PSI), as well as the electron acceptors A0, A1 and FX. PSI is a plastocyanin-ferredoxin oxidoreductase, converting photonic excitation into a charge separation, which transfers an electron from the donor P700 chlorophyll pair to the spectroscopically characterized acceptors A0, A1, FX, FA and FB in turn. Oxidized P700 is reduced on the lumenal side of the thylakoid membrane by plastocyanin. This Atropa belladonna (Belladonna) protein is Photosystem I P700 chlorophyll a apoprotein A1.